The following is a 136-amino-acid chain: Ribosome-binding factor A (136 aa).

Positions 1–22 (MNTAGPAGKLAGHAASGPTQRQ) are disordered.

This sequence belongs to the RbfA family. In terms of assembly, monomer. Binds 30S ribosomal subunits, but not 50S ribosomal subunits or 70S ribosomes.

The protein localises to the cytoplasm. In terms of biological role, one of several proteins that assist in the late maturation steps of the functional core of the 30S ribosomal subunit. Associates with free 30S ribosomal subunits (but not with 30S subunits that are part of 70S ribosomes or polysomes). Required for efficient processing of 16S rRNA. May interact with the 5'-terminal helix region of 16S rRNA. The protein is Ribosome-binding factor A of Gluconacetobacter diazotrophicus (strain ATCC 49037 / DSM 5601 / CCUG 37298 / CIP 103539 / LMG 7603 / PAl5).